Reading from the N-terminus, the 310-residue chain is Homoserine kinase (310 aa).

91–101 (PIGSGLGSSAC) provides a ligand contact to ATP.

Belongs to the GHMP kinase family. Homoserine kinase subfamily.

The protein resides in the cytoplasm. It catalyses the reaction L-homoserine + ATP = O-phospho-L-homoserine + ADP + H(+). It participates in amino-acid biosynthesis; L-threonine biosynthesis; L-threonine from L-aspartate: step 4/5. Functionally, catalyzes the ATP-dependent phosphorylation of L-homoserine to L-homoserine phosphate. The sequence is that of Homoserine kinase from Escherichia coli (strain SMS-3-5 / SECEC).